The chain runs to 151 residues: Large ribosomal subunit protein uL13 (151 aa).

This sequence belongs to the universal ribosomal protein uL13 family. In terms of assembly, part of the 50S ribosomal subunit.

Functionally, this protein is one of the early assembly proteins of the 50S ribosomal subunit, although it is not seen to bind rRNA by itself. It is important during the early stages of 50S assembly. This Mycoplasma mycoides subsp. mycoides SC (strain CCUG 32753 / NCTC 10114 / PG1) protein is Large ribosomal subunit protein uL13.